Here is a 525-residue protein sequence, read N- to C-terminus: MSL complex subunit 3 (525 aa).

The region spanning 13–72 is the Tudor-knot domain; the sequence is SGEKVLCFEPDPTKARVLYDAKIIDVIIGKDEKGRKIPEYLIHFNGWNRSWDRWAAEEHV. Disordered stretches follow at residues 119-148 and 302-383; these read KEKSKNDENSVSSTCHESCGEKNGGIKEHR and TTTT…DTSA. The span at 136 to 146 shows a compositional bias: basic and acidic residues; the sequence is SCGEKNGGIKE. The 350-residue stretch at 172–521 folds into the MRG domain; sequence DERTITIDIP…CEAHYSTKNP (350 aa). Positions 294-444 are required for the histone acetyltransferase activity of the MSL complex; it reads FFLPIKESTT…WKLVPDNYPP (151 aa). Ser313 and Ser315 each carry phosphoserine. Low complexity predominate over residues 320 to 332; the sequence is NPSTPQSTESQPP. Phosphoserine occurs at positions 371 and 404. Thr409 carries the phosphothreonine modification. 2 positions are modified to phosphoserine: Ser411 and Ser415.

Component of the MSL histone acetyltransferase complex at least composed of the KAT8/MOF, MSL1/hampin, MSL2 and MSL3. Interacts (via the MRG domain) with MSL1 and KAT8/MOF. In testis, expression is mostly restricted to the spermatocyte stage and only in a small portion of spermatogonia.

The protein localises to the nucleus. Functionally, non-catalytic component of the MSL histone acetyltransferase complex, a multiprotein complex that mediates the majority of histone H4 acetylation at 'Lys-16' (H4K16ac), an epigenetic mark that prevents chromatin compaction. The MSL complex is required for chromosome stability and genome integrity by maintaining homeostatic levels of H4K16ac. The MSL complex is also involved in gene dosage by promoting up-regulation of genes expressed by the X chromosome. X up-regulation is required to compensate for autosomal biallelic expression. The MSL complex also participates in gene dosage compensation by promoting expression of Tsix non-coding RNA. Acts as a histone reader that specifically recognizes and binds histone H4 monomethylated at 'Lys-20' (H4K20Me1) in a DNA-dependent manner and is proposed to be involved in chromosomal targeting of the MSL complex. May play a role X inactivation in females. In Mus musculus (Mouse), this protein is MSL complex subunit 3.